The following is a 449-amino-acid chain: Tubulin alpha-2 chain (449 aa).

8 residues coordinate GTP: glutamine 11, glutamate 71, serine 140, glycine 144, threonine 145, threonine 179, asparagine 206, and asparagine 228. Position 71 (glutamate 71) interacts with Mg(2+). Residue glutamate 254 is part of the active site.

This sequence belongs to the tubulin family. In terms of assembly, dimer of alpha and beta chains. A typical microtubule is a hollow water-filled tube with an outer diameter of 25 nm and an inner diameter of 15 nM. Alpha-beta heterodimers associate head-to-tail to form protofilaments running lengthwise along the microtubule wall with the beta-tubulin subunit facing the microtubule plus end conferring a structural polarity. Microtubules usually have 13 protofilaments but different protofilament numbers can be found in some organisms and specialized cells. Mg(2+) serves as cofactor.

It is found in the cytoplasm. It localises to the cytoskeleton. It carries out the reaction GTP + H2O = GDP + phosphate + H(+). Its function is as follows. Tubulin is the major constituent of microtubules, a cylinder consisting of laterally associated linear protofilaments composed of alpha- and beta-tubulin heterodimers. Microtubules grow by the addition of GTP-tubulin dimers to the microtubule end, where a stabilizing cap forms. Below the cap, tubulin dimers are in GDP-bound state, owing to GTPase activity of alpha-tubulin. The sequence is that of Tubulin alpha-2 chain (tub1) from Schizosaccharomyces pombe (strain 972 / ATCC 24843) (Fission yeast).